Here is a 457-residue protein sequence, read N- to C-terminus: Cell division cycle 20.1, cofactor of APC complex (457 aa).

WD repeat units lie at residues 138–175, 180–219, 223–260, 264–303, 312–354, 356–397, and 400–439; these read VDDF…TSEL, EEKG…QLRT, GHQS…PIVE, GHTQ…SNST, EHTS…CLNS, DTGS…KMAE, and GHTS…ETAK.

It belongs to the WD repeat CDC20/Fizzy family. The APC/C is composed of at least 11 subunits that stay tightly associated throughout the cell cycle. Interacts with APC10, FZR1, FZR2, FZR3. Binds to GIG1 and PYM. Part of the mitotic checkpoint complex (MCC); interacts with MAD2, BUB3.1, BUBR1 and BUB1. Binds to cyclins CYCA1-2, CYCB2-1 and CYCB2-2. Interacts with PANS1. As to expression, expressed in meristems and organ primordia. Present in flowers, leaves, stems, roots, pollen grains and developing seeds.

The protein localises to the nucleus. It functions in the pathway protein modification; protein ubiquitination. Its function is as follows. Component of the anaphase promoting complex/cyclosome (APC/C), a cell cycle-regulated E3 ubiquitin-protein ligase complex that controls progression through mitosis and the G1 phase of the cell cycle. The protein is Cell division cycle 20.1, cofactor of APC complex (CDC20-1) of Arabidopsis thaliana (Mouse-ear cress).